Consider the following 257-residue polypeptide: Large ribosomal subunit protein uL3 (257 aa).

Glutamine 151 bears the N5-methylglutamine mark. The interval 218–257 (YPASIKSAANTNTAPADAPVETPAEEAVVDTAATDGAQES) is disordered. Low complexity predominate over residues 225 to 236 (AANTNTAPADAP).

The protein belongs to the universal ribosomal protein uL3 family. As to quaternary structure, part of the 50S ribosomal subunit. Forms a cluster with proteins L14 and L19. Post-translationally, methylated by PrmB.

One of the primary rRNA binding proteins, it binds directly near the 3'-end of the 23S rRNA, where it nucleates assembly of the 50S subunit. The polypeptide is Large ribosomal subunit protein uL3 (Sphingopyxis alaskensis (strain DSM 13593 / LMG 18877 / RB2256) (Sphingomonas alaskensis)).